The sequence spans 436 residues: Probable D-serine dehydratase (436 aa).

Lys111 carries the post-translational modification N6-(pyridoxal phosphate)lysine.

Belongs to the serine/threonine dehydratase family. DsdA subfamily. Pyridoxal 5'-phosphate is required as a cofactor.

The enzyme catalyses D-serine = pyruvate + NH4(+). The sequence is that of Probable D-serine dehydratase from Lactiplantibacillus plantarum (strain ATCC BAA-793 / NCIMB 8826 / WCFS1) (Lactobacillus plantarum).